We begin with the raw amino-acid sequence, 216 residues long: GTPase IMAP family member GIMD1 (216 aa).

Positions 5–216 (KMTINLALFG…ENCYQVLTFK (212 aa)) constitute an AIG1-type G domain. Residues 14 to 22 (GMTQSGKSS), Ser-35, and 147 to 149 (HAE) each bind GTP.

Belongs to the TRAFAC class TrmE-Era-EngA-EngB-Septin-like GTPase superfamily. AIG1/Toc34/Toc159-like paraseptin GTPase family. IAN subfamily.

This chain is GTPase IMAP family member GIMD1 (GIMD1), found in Bos taurus (Bovine).